The chain runs to 292 residues: 4-hydroxy-tetrahydrodipicolinate synthase (292 aa).

Threonine 45 is a pyruvate binding site. Catalysis depends on tyrosine 133, which acts as the Proton donor/acceptor. Lysine 161 functions as the Schiff-base intermediate with substrate in the catalytic mechanism. Residue isoleucine 203 participates in pyruvate binding.

Belongs to the DapA family. As to quaternary structure, homodimer.

Its subcellular location is the cytoplasm. The enzyme catalyses L-aspartate 4-semialdehyde + pyruvate = (2S,4S)-4-hydroxy-2,3,4,5-tetrahydrodipicolinate + H2O + H(+). The protein operates within amino-acid biosynthesis; L-lysine biosynthesis via DAP pathway; (S)-tetrahydrodipicolinate from L-aspartate: step 3/4. Catalyzes the condensation of (S)-aspartate-beta-semialdehyde [(S)-ASA] and pyruvate to 4-hydroxy-tetrahydrodipicolinate (HTPA). The protein is 4-hydroxy-tetrahydrodipicolinate synthase of Stutzerimonas stutzeri (strain A1501) (Pseudomonas stutzeri).